The sequence spans 633 residues: MTEEACRTRSQKRALERDPTEDDVESKKIKMERGLLASDLNTDGDMRVTPEPGAGPTQGLLRATEATAMAMGRGEGLVGDGPVDMRTSHSDMKSERRPPSPDVIVLSDNEQPSSPRVNGLTTVALKETSTEALMKSSPEERERMIKQLKEELRLEEAKLVLLKKLRQSQIQKEATAQKPTGSVGSTVTTPPPLVRGTQNIPAGKPSLQTSSARMPGSVIPPPLVRGGQQASSKLGPQASSQVVMPPLVRGAQQIHSIRQHSSTGPPPLLLAPRASVPSVQIQGQRIIQQGLIRVANVPNTSLLVNIPQPTPASLKGTTATSAQANSTPTSVASVVTSAESPASRQAAAKLALRKQLEKTLLEIPPPKPPAPEMNFLPSAANNEFIYLVGLEEVVQNLLETQGRMSAATVLSREPYMCAQCKTDFTCRWREEKSGAIMCENCMTTNQKKALKVEHTSRLKAAFVKALQQEQEIEQRLLQQGTAPAQAKAEPTAAPHPVLKQVIKPRRKLAFRSGEARDWSNGAVLQASSQLSRGSATTPRGVLHTFSPSPKLQNSASATALVSRTGRHSERTVSAGKGSATSNWKKTPLSTGGTLAFVSPSLAVHKSSSAVDRQREYLLDMIPPRSIPQSATWK.

Residues 1 to 18 show a composition bias toward basic and acidic residues; sequence MTEEACRTRSQKRALERD. 2 disordered regions span residues 1-59 and 73-119; these read MTEE…PTQG and RGEG…RVNG. Residues Thr-20 and Thr-49 each carry the phosphothreonine modification. A compositionally biased stretch (basic and acidic residues) spans 86-99; sequence RTSHSDMKSERRPP. Lys-93 is covalently cross-linked (Glycyl lysine isopeptide (Lys-Gly) (interchain with G-Cter in SUMO2)). A phosphoserine mark is found at Ser-100, Ser-107, Ser-113, Ser-114, and Ser-137. Positions 108-119 are enriched in polar residues; sequence DNEQPSSPRVNG. Residues 139-174 adopt a coiled-coil conformation; the sequence is EERERMIKQLKEELRLEEAKLVLLKKLRQSQIQKEA. The CR1; interaction with HDAC1, HDAC2, MBD2 and MTA2 stretch occupies residues 144–178; the sequence is MIKQLKEELRLEEAKLVLLKKLRQSQIQKEATAQK. Positions 172–188 are enriched in polar residues; sequence KEATAQKPTGSVGSTVT. The tract at residues 172 to 238 is disordered; sequence KEATAQKPTG…QASSKLGPQA (67 aa). Residue Lys-178 forms a Glycyl lysine isopeptide (Lys-Gly) (interchain with G-Cter in SUMO2) linkage. Positions 181–295 are interaction with ZMYND8; the sequence is GSVGSTVTTP…IIQQGLIRVA (115 aa). Thr-189 carries the phosphothreonine modification. Positions 196–212 are enriched in polar residues; that stretch reads GTQNIPAGKPSLQTSSA. Lys-204 is covalently cross-linked (Glycyl lysine isopeptide (Lys-Gly) (interchain with G-Cter in SUMO2)). Arg-225 bears the Omega-N-methylarginine mark. Residues 228 to 238 show a composition bias toward polar residues; it reads QQASSKLGPQA. Lys-233 participates in a covalent cross-link: Glycyl lysine isopeptide (Lys-Gly) (interchain with G-Cter in SUMO2). Residues Arg-249, Arg-258, and Arg-273 each carry the omega-N-methylarginine modification. Ser-275 is modified (phosphoserine). Omega-N-methylarginine is present on Arg-285. A phosphoserine mark is found at Ser-340 and Ser-343. The tract at residues 340–480 is CR2; histone tail-binding and interaction with CHD4 and CDK2AP1; it reads SPASRQAAAK…EIEQRLLQQG (141 aa). Residues 411–464 form a GATA-type zinc finger; it reads SREPYMCAQCKTDFTCRWREEKSGAIMCENCMTTNQKKALKVEHTSRLKAAFVK. Residues Lys-464 and Lys-487 each participate in a glycyl lysine isopeptide (Lys-Gly) (interchain with G-Cter in SUMO2) cross-link. Ser-512 carries the phosphoserine modification. Asymmetric dimethylarginine; alternate is present on Arg-539. Arg-539 bears the Omega-N-methylarginine; alternate mark. A phosphoserine mark is found at Ser-546 and Ser-548. A Glycyl lysine isopeptide (Lys-Gly) (interchain with G-Cter in SUMO2) cross-link involves residue Lys-550. Ser-556 carries the post-translational modification Phosphoserine. The tract at residues 561-585 is disordered; the sequence is VSRTGRHSERTVSAGKGSATSNWKK. A Glycyl lysine isopeptide (Lys-Gly) (interchain with G-Cter in SUMO2) cross-link involves residue Lys-585. Phosphoserine is present on Ser-598. Lys-605 participates in a covalent cross-link: Glycyl lysine isopeptide (Lys-Gly) (interchain with G-Cter in SUMO2).

In terms of assembly, homooligomer. Component of the nucleosome remodeling and deacetylase (NuRD) repressor complex, composed of core proteins MTA1, MTA2, MTA3, RBBP4, RBBP7, HDAC1, HDAC2, MBD2, MBD3, and peripherally associated proteins CDK2AP1, CDK2AP2, GATAD2A, GATAD2B, CHD3, CHD4 and CHD5. The exact stoichiometry of the NuRD complex is unknown, and some subunits such as MBD2 and MBD3, GATAD2A and GATAD2B, and CHD3, CHD4 and CHD5 define mutually exclusive NuRD complexes. Component of the MeCP1 histone deacetylase complex. Interacts with CDK2AP1. Interacts with CHD4. Interacts with ERCC6. Interacts with HDAC1. Interacts with HDAC2. Interacts with MBD2; this interaction is required for the enhancement of MBD2-mediated repression and for targeting to the chromatin. Interacts with MBD3. Interacts with MTA2. Interacts with ZMYND8. Interacts with histone tails, including that of histones H2A, H2B, H3 and H4, the interaction is reduced by histone acetylation. As to expression, ubiquitous, both in fetal and adult tissues.

The protein localises to the nucleus speckle. It is found in the nucleus. Its subcellular location is the chromosome. In terms of biological role, transcriptional repressor. Acts as a component of the histone deacetylase NuRD complex which participates in the remodeling of chromatin. Enhances MBD2-mediated repression. Efficient repression requires the presence of GATAD2B. This chain is Transcriptional repressor p66-alpha (GATAD2A), found in Homo sapiens (Human).